A 488-amino-acid chain; its full sequence is Serine/threonine-protein kinase haspin homolog hrk1 (488 aa).

Residues 156-488 (TFEIQKIGEA…SLLNWVRQKY (333 aa)) enclose the Protein kinase domain. ATP-binding positions include 162-170 (IGEASYSEV) and K184. D305 functions as the Proton acceptor in the catalytic mechanism.

This sequence belongs to the protein kinase superfamily. Ser/Thr protein kinase family. Haspin subfamily. In terms of assembly, interacts with pds5 and swi6.

It localises to the cytoplasm. The protein resides in the chromosome. The enzyme catalyses L-seryl-[protein] + ATP = O-phospho-L-seryl-[protein] + ADP + H(+). It catalyses the reaction L-threonyl-[protein] + ATP = O-phospho-L-threonyl-[protein] + ADP + H(+). Functionally, serine/threonine haspin-like protein kinase involved in cell cycle regulation. Acts in chromosomal passenger complex (CPC) targeting to centromeres by phosphorylating histone H3 at 'Thr3' (H3T3ph). The protein is Serine/threonine-protein kinase haspin homolog hrk1 (hrk1) of Schizosaccharomyces pombe (strain 972 / ATCC 24843) (Fission yeast).